The primary structure comprises 630 residues: Putative polypeptide N-acetylgalactosaminyltransferase 10 (630 aa).

Residues 1–6 lie on the Cytoplasmic side of the membrane; it reads MNVDLR. Residues 7–26 form a helical; Signal-anchor for type II membrane protein membrane-spanning segment; the sequence is LIVRLLLAILLTSLVTTILM. The Lumenal segment spans residues 27-630; it reads GKQIHRRLVK…APYDPQREPH (604 aa). N-linked (GlcNAc...) asparagine glycosylation is found at Asn-72, Asn-84, Asn-146, and Asn-168. 3 cysteine pairs are disulfide-bonded: Cys-157-Cys-386, Cys-377-Cys-456, and Cys-496-Cys-513. Positions 166 to 277 are catalytic subdomain A; it reads LPNVTVIIAF…TNWLPPLLEP (112 aa). Positions 207 and 238 each coordinate substrate. Asp-261 is a Mn(2+) binding site. A substrate-binding site is contributed by Ser-262. His-263 lines the Mn(2+) pocket. A catalytic subdomain B region spans residues 333–394; sequence PYRTPVLSGA…PCARVGHIGK (62 aa). Trp-363 contacts substrate. A Mn(2+)-binding site is contributed by His-391. The region spanning 483-618 is the Ricin B-type lectin domain; the sequence is FSGVIESVAF…NQLEQQWKVG (136 aa). Asn-525 carries an N-linked (GlcNAc...) asparagine glycan. Disulfide bonds link Cys-543/Cys-559 and Cys-586/Cys-606.

This sequence belongs to the glycosyltransferase 2 family. GalNAc-T subfamily. It depends on Mn(2+) as a cofactor. As to expression, during embryonic stages 9-11, weakly expressed in the mesoderm. During embryonic stages 12-13, very weak expression is observed in the somatic mesoderm region. No expression detected from stage 14-15. During embryonic stages 16-17, expressed in the epidermis and the antennomaxillary complex. In third instar larvae, expressed ubiquitously in wing, eye-antennal, leg and haltere imaginal disks.

The protein resides in the golgi apparatus membrane. It carries out the reaction L-seryl-[protein] + UDP-N-acetyl-alpha-D-galactosamine = a 3-O-[N-acetyl-alpha-D-galactosaminyl]-L-seryl-[protein] + UDP + H(+). The catalysed reaction is L-threonyl-[protein] + UDP-N-acetyl-alpha-D-galactosamine = a 3-O-[N-acetyl-alpha-D-galactosaminyl]-L-threonyl-[protein] + UDP + H(+). Its pathway is protein modification; protein glycosylation. In terms of biological role, may catalyze the initial reaction in O-linked oligosaccharide biosynthesis, the transfer of an N-acetyl-D-galactosamine residue to a serine or threonine residue on the protein receptor. In Drosophila melanogaster (Fruit fly), this protein is Putative polypeptide N-acetylgalactosaminyltransferase 10 (pgant10).